The chain runs to 687 residues: Fatty acid oxidation complex subunit alpha (687 aa).

The interval 1 to 191 is enoyl-CoA hydratase; that stretch reads MKNTSAFAWT…KLGVVDASVP (191 aa). The segment at 307-687 is 3-hydroxyacyl-CoA dehydrogenase; it reads KSIDYVGVLG…ADKYGDRFIE (381 aa).

It in the N-terminal section; belongs to the enoyl-CoA hydratase/isomerase family. The protein in the central section; belongs to the 3-hydroxyacyl-CoA dehydrogenase family. Heterotetramer of two alpha chains (FadJ) and two beta chains (FadI).

The protein localises to the cytoplasm. It carries out the reaction a (3S)-3-hydroxyacyl-CoA = a (2E)-enoyl-CoA + H2O. It catalyses the reaction a 4-saturated-(3S)-3-hydroxyacyl-CoA = a (3E)-enoyl-CoA + H2O. The enzyme catalyses a (3S)-3-hydroxyacyl-CoA + NAD(+) = a 3-oxoacyl-CoA + NADH + H(+). The catalysed reaction is (3S)-3-hydroxybutanoyl-CoA = (3R)-3-hydroxybutanoyl-CoA. It participates in lipid metabolism; fatty acid beta-oxidation. Functionally, catalyzes the formation of a hydroxyacyl-CoA by addition of water on enoyl-CoA. Also exhibits 3-hydroxyacyl-CoA epimerase and 3-hydroxyacyl-CoA dehydrogenase activities. The sequence is that of Fatty acid oxidation complex subunit alpha from Aliivibrio fischeri (strain ATCC 700601 / ES114) (Vibrio fischeri).